The following is a 624-amino-acid chain: RQC trigger complex subunit CUE3 (624 aa).

One can recognise a CUE domain in the interval 316–359 (VNEEQLSALMELFPQFSKYQLSQTLLAYDNNIELVTNKIFEDPT). Disordered regions lie at residues 366–390 (REPA…ELSI), 435–469 (RDDT…DDSN), and 546–624 (SKTG…NNAI). Serine 377 carries the phosphoserine modification. Basic and acidic residues-rich tracts occupy residues 443-455 (DVNR…RIGL) and 568-589 (EQAK…TEQK). Residues 590 to 617 (KRQHAKNEKRKGARANHNRKKGHDKKLA) are compositionally biased toward basic residues.

In terms of assembly, component of the RQT (ribosome quality control trigger) complex, composed of SLH1, CUE3, and RQT4. Interacts with ubiquitin; the interaction is direct. Interacts with SLH1. Interacts with RQT4. Interacts with HEL2. Associates with translating ribosomes.

It is found in the cytoplasm. Functionally, involved in activation of the ribosome quality control (RQC) pathway, a pathway that degrades nascent peptide chains during problematic translation. Specifically recognizes and binds RPS20/uS10 ubiquitinated by HEL2, promoting recruitment of the RQT (ribosome quality control trigger) complex on stalled ribosomes, followed by disassembly of stalled ribosomes. This is RQC trigger complex subunit CUE3 (CUE3) from Saccharomyces cerevisiae (strain ATCC 204508 / S288c) (Baker's yeast).